We begin with the raw amino-acid sequence, 499 residues long: Calcium/calmodulin-dependent protein kinase type II subunit delta (499 aa).

A2 is modified (N-acetylalanine). One can recognise a Protein kinase domain in the interval Y14–I272. ATP is bound by residues L20–V28 and K43. D136 acts as the Proton acceptor in catalysis. Positions H283–K292 are autoinhibitory domain. T287 carries the post-translational modification Phosphothreonine; by autocatalysis. The segment at L291–K301 is calmodulin-binding. T306 and T307 each carry phosphothreonine; by autocatalysis. At S315 the chain carries Phosphoserine. At K318 the chain carries N6-acetyllysine. Phosphoserine is present on residues S319 and S330. T331 carries the phosphothreonine modification. S333 bears the Phosphoserine mark. Residues T336 and T337 each carry the phosphothreonine modification. Residues S404, S490, and S494 each carry the phosphoserine modification.

This sequence belongs to the protein kinase superfamily. CAMK Ser/Thr protein kinase family. CaMK subfamily. In terms of assembly, CAMK2 is composed of 4 different chains: alpha (CAMK2A), beta (CAMK2B), gamma (CAMK2G), and delta (CAMK2D). The different isoforms assemble into homo- or heteromultimeric holoenzymes composed of 12 subunits with two hexameric rings stacked one on top of the other. Interacts with RRAD CACNB2. Autophosphorylation of Thr-287 following activation by Ca(2+)/calmodulin. Phosphorylation of Thr-287 locks the kinase into an activated state.

It localises to the cell membrane. The protein resides in the sarcolemma. The protein localises to the sarcoplasmic reticulum membrane. It catalyses the reaction L-seryl-[protein] + ATP = O-phospho-L-seryl-[protein] + ADP + H(+). The enzyme catalyses L-threonyl-[protein] + ATP = O-phospho-L-threonyl-[protein] + ADP + H(+). Its activity is regulated as follows. Activated by Ca(2+)/calmodulin. Binding of calmodulin results in conformational change that relieves intrasteric autoinhibition and allows autophosphorylation of Thr-287 which turns the kinase in a constitutively active form and confers to the kinase a Ca(2+)-independent activity. In terms of biological role, calcium/calmodulin-dependent protein kinase involved in the regulation of Ca(2+) homeostatis and excitation-contraction coupling (ECC) in heart by targeting ion channels, transporters and accessory proteins involved in Ca(2+) influx into the myocyte, Ca(2+) release from the sarcoplasmic reticulum (SR), SR Ca(2+) uptake and Na(+) and K(+) channel transport. Targets also transcription factors and signaling molecules to regulate heart function. In its activated form, is involved in the pathogenesis of dilated cardiomyopathy and heart failure. Contributes to cardiac decompensation and heart failure by regulating SR Ca(2+) release via direct phosphorylation of RYR2 Ca(2+) channel on 'Ser-2808'. In the nucleus, phosphorylates the MEF2 repressor HDAC4, promoting its nuclear export and binding to 14-3-3 protein, and expression of MEF2 and genes involved in the hypertrophic program. Is essential for left ventricular remodeling responses to myocardial infarction. In pathological myocardial remodeling acts downstream of the beta adrenergic receptor signaling cascade to regulate key proteins involved in ECC. Regulates Ca(2+) influx to myocytes by binding and phosphorylating the L-type Ca(2+) channel subunit beta-2 CACNB2. In addition to Ca(2+) channels, can target and regulate the cardiac sarcolemmal Na(+) channel Nav1.5/SCN5A and the K+ channel Kv4.3/KCND3, which contribute to arrhythmogenesis in heart failure. Phosphorylates phospholamban (PLN/PLB), an endogenous inhibitor of SERCA2A/ATP2A2, contributing to the enhancement of SR Ca(2+) uptake that may be important in frequency-dependent acceleration of relaxation (FDAR) and maintenance of contractile function during acidosis. May participate in the modulation of skeletal muscle function in response to exercise, by regulating SR Ca(2+) transport through phosphorylation of PLN/PLB and triadin, a ryanodine receptor-coupling factor. In response to interferon-gamma (IFN-gamma) stimulation, catalyzes phosphorylation of STAT1, stimulating the JAK-STAT signaling pathway. This chain is Calcium/calmodulin-dependent protein kinase type II subunit delta (CAMK2D), found in Sus scrofa (Pig).